A 165-amino-acid chain; its full sequence is Protein SprT (165 aa).

The SprT-like domain maps to 20–163; sequence EKLAQANLKL…RCVHCGEQLV (144 aa). His78 lines the Zn(2+) pocket. Residue Glu79 is part of the active site. His82 contacts Zn(2+).

It belongs to the SprT family. It depends on Zn(2+) as a cofactor.

It is found in the cytoplasm. This chain is Protein SprT, found in Shigella boydii serotype 18 (strain CDC 3083-94 / BS512).